Consider the following 163-residue polypeptide: Inner membrane protein YcdZ (163 aa).

Residues 1–2 (MN) lie on the Cytoplasmic side of the membrane. Residues 3 to 23 (ILLSIAITTGILSGIWGWVAV) traverse the membrane as a helical segment. Residue Ser-24 is a topological domain, periplasmic. The helical transmembrane segment at 25–45 (LGLLSWAGFLGCTAYFACPQG) threads the bilayer. Topologically, residues 46-48 (GLK) are cytoplasmic. A helical membrane pass occupies residues 49–69 (GLAISAATLLSGVVWAMVIIY). Residues 70–71 (GS) are Periplasmic-facing. Residues 72-92 (ALAPHLEILGYVITGIVAFLM) form a helical membrane-spanning segment. Topologically, residues 93 to 98 (CIQAKQ) are cytoplasmic. A helical transmembrane segment spans residues 99-119 (LLLSFVPGTFIGACATFAGQG). The Periplasmic portion of the chain corresponds to 120-122 (DWK). The helical transmembrane segment at 123-143 (LVLPSLALGLIFGYAMKNSGL) threads the bilayer. Over 144–163 (WLAARSAKTAHREQEIKNKA) the chain is Cytoplasmic.

The protein to E.coli YahC.

It localises to the cell inner membrane. This is Inner membrane protein YcdZ (ycdZ) from Escherichia coli (strain K12).